The primary structure comprises 355 residues: S-adenosylmethionine:tRNA ribosyltransferase-isomerase (355 aa).

This sequence belongs to the QueA family. In terms of assembly, monomer.

Its subcellular location is the cytoplasm. The enzyme catalyses 7-aminomethyl-7-carbaguanosine(34) in tRNA + S-adenosyl-L-methionine = epoxyqueuosine(34) in tRNA + adenine + L-methionine + 2 H(+). It participates in tRNA modification; tRNA-queuosine biosynthesis. Functionally, transfers and isomerizes the ribose moiety from AdoMet to the 7-aminomethyl group of 7-deazaguanine (preQ1-tRNA) to give epoxyqueuosine (oQ-tRNA). This is S-adenosylmethionine:tRNA ribosyltransferase-isomerase from Photorhabdus laumondii subsp. laumondii (strain DSM 15139 / CIP 105565 / TT01) (Photorhabdus luminescens subsp. laumondii).